Here is a 219-residue protein sequence, read N- to C-terminus: 3-dehydroquinate dehydratase (219 aa).

3-dehydroquinate contacts are provided by residues 34-36 (ELR) and Arg63. His114 (proton donor/acceptor) is an active-site residue. The active-site Schiff-base intermediate with substrate is Lys139. Residues Arg174, Thr193, and Gln197 each contribute to the 3-dehydroquinate site.

The protein belongs to the type-I 3-dehydroquinase family. In terms of assembly, homodimer.

It carries out the reaction 3-dehydroquinate = 3-dehydroshikimate + H2O. It functions in the pathway metabolic intermediate biosynthesis; chorismate biosynthesis; chorismate from D-erythrose 4-phosphate and phosphoenolpyruvate: step 3/7. Functionally, involved in the third step of the chorismate pathway, which leads to the biosynthesis of aromatic amino acids. Catalyzes the cis-dehydration of 3-dehydroquinate (DHQ) and introduces the first double bond of the aromatic ring to yield 3-dehydroshikimate. This is 3-dehydroquinate dehydratase from Sulfolobus acidocaldarius (strain ATCC 33909 / DSM 639 / JCM 8929 / NBRC 15157 / NCIMB 11770).